The following is a 704-amino-acid chain: Elongation factor G (704 aa).

The 283-residue stretch at 8 to 290 (EKYRNIGICA…GVVRYLPAPN (283 aa)) folds into the tr-type G domain. GTP-binding positions include 17–24 (AHVDAGKT), 88–92 (DTPGH), and 142–145 (NKMD).

The protein belongs to the TRAFAC class translation factor GTPase superfamily. Classic translation factor GTPase family. EF-G/EF-2 subfamily.

It is found in the cytoplasm. Functionally, catalyzes the GTP-dependent ribosomal translocation step during translation elongation. During this step, the ribosome changes from the pre-translocational (PRE) to the post-translocational (POST) state as the newly formed A-site-bound peptidyl-tRNA and P-site-bound deacylated tRNA move to the P and E sites, respectively. Catalyzes the coordinated movement of the two tRNA molecules, the mRNA and conformational changes in the ribosome. This Francisella tularensis subsp. mediasiatica (strain FSC147) protein is Elongation factor G.